We begin with the raw amino-acid sequence, 527 residues long: Ankyrin repeat domain-containing protein 42 (527 aa).

Positions 1–27 are disordered; it reads MPGVANPGPSKSRRETADSSSRKKVHF. The span at 12–21 shows a compositional bias: basic and acidic residues; sequence SRRETADSSS. ANK repeat units follow at residues 25–54, 59–88, 92–121, 125–154, 158–187, 191–220, 228–257, 263–293, 297–326, and 330–360; these read VHFSSIHDAVRAGDVKQLSDIVERGANLNE, HQFTPLHWAAHSGSLECLHWLLWSGADATQ, RGWTAAHIAAIRGQDACLQALIINGANLAT, RGCTPLHLAATHGHSFSLQIMLRSGVDPSV, REWKPVHYASFHGRLGCLQLLVKWGCGIED, NGNLPVHLAAMEGHLHCLKFLLSRMNSATQ, NGENVLDLAQRFLKQNVVEFIQGAQYEGSH, DLAFPGHVAAFKGDLEVLKKLIGDGVINLNE, NGSTPMHKAAGQGHIDCLQWLIEMGAESNI, and AGETPSDVAKRFAHLAAVKLLEGLQKYEIDD. Residues 395–484 are a coiled coil; sequence NARMRAHKKI…ETLQKIQVTS (90 aa).

The protein is Ankyrin repeat domain-containing protein 42 (Ankrd42) of Mus musculus (Mouse).